The following is a 389-amino-acid chain: Glutamate 5-kinase (389 aa).

Lys16 provides a ligand contact to ATP. Residues Ser56, Asp143, and Asn155 each coordinate substrate. 175-176 (SD) contributes to the ATP binding site. The 78-residue stretch at 281-358 (AGELHVDDGA…AEIEAILGYA (78 aa)) folds into the PUA domain.

The protein belongs to the glutamate 5-kinase family.

It is found in the cytoplasm. The enzyme catalyses L-glutamate + ATP = L-glutamyl 5-phosphate + ADP. It functions in the pathway amino-acid biosynthesis; L-proline biosynthesis; L-glutamate 5-semialdehyde from L-glutamate: step 1/2. Its function is as follows. Catalyzes the transfer of a phosphate group to glutamate to form L-glutamate 5-phosphate. In Rhizobium etli (strain CIAT 652), this protein is Glutamate 5-kinase.